The primary structure comprises 374 residues: 4-hydroxy-3-methylbut-2-en-1-yl diphosphate synthase (flavodoxin) (374 aa).

[4Fe-4S] cluster-binding residues include Cys-270, Cys-273, Cys-305, and Glu-312.

It belongs to the IspG family. [4Fe-4S] cluster serves as cofactor.

It carries out the reaction (2E)-4-hydroxy-3-methylbut-2-enyl diphosphate + oxidized [flavodoxin] + H2O + 2 H(+) = 2-C-methyl-D-erythritol 2,4-cyclic diphosphate + reduced [flavodoxin]. It participates in isoprenoid biosynthesis; isopentenyl diphosphate biosynthesis via DXP pathway; isopentenyl diphosphate from 1-deoxy-D-xylulose 5-phosphate: step 5/6. Functionally, converts 2C-methyl-D-erythritol 2,4-cyclodiphosphate (ME-2,4cPP) into 1-hydroxy-2-methyl-2-(E)-butenyl 4-diphosphate. This chain is 4-hydroxy-3-methylbut-2-en-1-yl diphosphate synthase (flavodoxin), found in Cellvibrio japonicus (strain Ueda107) (Pseudomonas fluorescens subsp. cellulosa).